Consider the following 434-residue polypeptide: MESESESGAAADTPPLETLSFHGDEEIIEVVELDPGPPDPDDLAQEMEDVDFEEEEEEEGNEEGWVLEPQEGVVGSMEGPDDSEVTFALHSASVFCVSLDPKTNTLAVTGGEDDKAFVWRLSDGELLFECAGHKDSVTCAGFSHDSTLVATGDMSGLLKVWQVDTKEEVWSFEAGDLEWMEWHPRAPVLLAGTADGNTWMWKVPNGDCKTFQGPNCPATCGRVLPDGKRAVVGYEDGTIRIWDLKQGSPIHVLKGTEGHQGPLTCVAANQDGSLILTGSVDCQAKLVSATTGKVVGVFRPETVASQPSLGEGEESESNSVESLGFCSVMPLAAVGYLDGTLAIYDLATQTLRHQCQHQSGIVQLLWEAGTAVVYTCSLDGIVRLWDARTGRLLTDYRGHTAEILDFALSKDASLVVTTSGDHKAKVFCVQRPDR.

The disordered stretch occupies residues 1–63 (MESESESGAA…EEEEEEGNEE (63 aa)). Serine 20 carries the phosphoserine modification. The span at 39 to 62 (DPDDLAQEMEDVDFEEEEEEEGNE) shows a compositional bias: acidic residues. WD repeat units follow at residues 89 to 129 (LHSA…LLFE), 132 to 171 (GHKD…EVWS), 173 to 212 (EAGD…KTFQ), 214 to 254 (PNCP…HVLK), 258 to 299 (GHQG…GVFR), 315 to 354 (SESN…LRHQ), 356 to 395 (QHQS…LLTD), and 398 to 433 (GHTA…QRPD).

As to expression, expressed in metastatic melanoma, liver, skin, kidney, heart, lung, lymph node, skeletal muscle and brain, and also in A2058 melanoma cells and activated T-cells (at protein level). Expressed in blood vessels. Strongly expressed in endothelial cells, cytotrophoblasts, and poorly differentiated. colon adenocarcinoma cells found in lymphatics.

The protein resides in the cell membrane. It is found in the cytoplasm. Plays a role in angiogenesis and cell migration. In smooth muscle cell migration, may act through the RhoA pathway. This chain is Angio-associated migratory cell protein (AAMP), found in Homo sapiens (Human).